Reading from the N-terminus, the 1073-residue chain is Pleckstrin homology domain-containing family G member 5 (1073 aa).

Disordered regions lie at residues 1–28, 91–135, 217–261, 278–309, and 367–388; these read MGTG…SQLL, VSTR…ARRR, PGDE…ESSL, GEAG…GINE, and SWEE…RLED. 2 stretches are compositionally biased toward basic and acidic residues: residues 217-231 and 249-260; these read PGDE…KDSK and ERVDPQSRRESS. Acidic residues predominate over residues 367-381; the sequence is SWEEEEEDDEEDEES. The DH domain occupies 406–598; sequence HQQEAVWELL…ERFIHHVNTC (193 aa). Positions 654-754 constitute a PH domain; it reads QLLLEGSLRM…WVDTIYNAQN (101 aa). Disordered regions lie at residues 762-818, 833-873, and 899-925; these read QLSA…TSDG, TLSS…GPVD, and PVVE…TPVQ. Over residues 777–790 the composition is skewed to acidic residues; it reads LEEEEDEQEEEGEE. Composition is skewed to polar residues over residues 791-809 and 844-864; these read SGTS…SNSL and VSSQ…TPTS. Phosphothreonine is present on threonine 793. Serine 798 carries the phosphoserine modification. Residues 900 to 915 show a composition bias toward pro residues; that stretch reads VVEPAPVPQTPSPQPS. Phosphothreonine is present on threonine 909. 3 positions are modified to phosphoserine: serine 911, serine 936, and serine 941. The disordered stretch occupies residues 993–1046; sequence MCDPCHGPQLSESENRPSHMTGGPADSARRRCREMPSGTMSRVQSEPPSGVSAQ. Residues 1030–1039 show a composition bias toward polar residues; sequence GTMSRVQSEP.

Interacts with GIPC1/synectin and RHOA. Expressed in neurons and glial cells of the peripheral nervous system, with highest levels of expression in the brain and sciatic nerve endoneurium. Isoform 2 is expressed at detectable levels only in malignant cells.

The protein localises to the cytoplasm. The protein resides in the perinuclear region. It is found in the cell membrane. It localises to the cell junction. Its subcellular location is the cell projection. The protein localises to the lamellipodium. In terms of biological role, functions as a guanine exchange factor (GEF) for RAB26 and thus regulates autophagy of synaptic vesicles in axon terminal of motoneurons. Involved in the control of neuronal cell differentiation. Plays a role in angiogenesis through regulation of endothelial cells chemotaxis. Also affects the migration, adhesion, and matrix/bone degradation in macrophages and osteoclasts. This chain is Pleckstrin homology domain-containing family G member 5 (Plekhg5), found in Mus musculus (Mouse).